The following is a 176-amino-acid chain: Secreted LysM effector ELP2 (176 aa).

A signal peptide spans 1–18; it reads MQFSIFTVLAAAASFAVA. Over residues 31-45 the composition is skewed to low complexity; sequence TSAAANPSPTTSGAA. The interval 31–50 is disordered; sequence TSAAANPSPTTSGAANPSPT. A LysM 1 domain is found at 58-102; sequence HKTTVKAGQTLTTIAERFHSGICDIAWQNKLENPNVIFVGQVLLV. An N-linked (GlcNAc...) asparagine glycan is attached at N111. In terms of domain architecture, LysM 2 spans 129 to 173; it reads ATYTIKSGDTFFAVAQSLGITTDSLTGANPGVVPENLQIDQVINV.

The protein belongs to the secreted LysM effector family. Forms homodimers in a chitin-independent manner through interactions at the N-termini of EPL2 monomers. Homodimers are further polymerized in a chitin-dependent manner.

Its subcellular location is the secreted. Secreted effector that enables the plant pathogenic fungus to manipulate host defenses for successful infection. Binds chitin oligomers and polymer with high affinity and plays a dual role, not only in the suppression of chitin-triggered immune responses, but also in appressorium function. Does not protect fungal hyphae against plant chitinases but suppresses chitin-triggered plant immune responses. Chitin-induced polymerization of homodimers forms a contiguous ELP2 highly oligomeric super-complexe that may precipitate at infection sites to eliminate chitin oligomers, and thus suppress the activation of chitin-induced plant immunity. In Colletotrichum higginsianum (strain IMI 349063) (Crucifer anthracnose fungus), this protein is Secreted LysM effector ELP2.